The following is a 456-amino-acid chain: Bifunctional protein GlmU (456 aa).

The tract at residues 1–230 is pyrophosphorylase; sequence MDKRFAVILA…FQETLGVNDR (230 aa). UDP-N-acetyl-alpha-D-glucosamine contacts are provided by residues 9 to 12, K23, Q73, and 78 to 79; these read LAAG and GT. D103 is a Mg(2+) binding site. Residues G140, E155, N170, and N228 each contribute to the UDP-N-acetyl-alpha-D-glucosamine site. Residue N228 coordinates Mg(2+). The segment at 231 to 251 is linker; sequence VALSQAEMYMKERINKRHMQN. The tract at residues 252-456 is N-acetyltransferase; that stretch reads GVTLIDPMNT…EDYVKNIHKK (205 aa). 2 residues coordinate UDP-N-acetyl-alpha-D-glucosamine: R333 and K351. H363 functions as the Proton acceptor in the catalytic mechanism. UDP-N-acetyl-alpha-D-glucosamine is bound by residues Y366 and N377. Residues 386-387, A423, and R440 each bind acetyl-CoA; that span reads NY.

In the N-terminal section; belongs to the N-acetylglucosamine-1-phosphate uridyltransferase family. The protein in the C-terminal section; belongs to the transferase hexapeptide repeat family. Homotrimer. It depends on Mg(2+) as a cofactor.

It is found in the cytoplasm. It carries out the reaction alpha-D-glucosamine 1-phosphate + acetyl-CoA = N-acetyl-alpha-D-glucosamine 1-phosphate + CoA + H(+). The catalysed reaction is N-acetyl-alpha-D-glucosamine 1-phosphate + UTP + H(+) = UDP-N-acetyl-alpha-D-glucosamine + diphosphate. The protein operates within nucleotide-sugar biosynthesis; UDP-N-acetyl-alpha-D-glucosamine biosynthesis; N-acetyl-alpha-D-glucosamine 1-phosphate from alpha-D-glucosamine 6-phosphate (route II): step 2/2. Its pathway is nucleotide-sugar biosynthesis; UDP-N-acetyl-alpha-D-glucosamine biosynthesis; UDP-N-acetyl-alpha-D-glucosamine from N-acetyl-alpha-D-glucosamine 1-phosphate: step 1/1. It participates in bacterial outer membrane biogenesis; LPS lipid A biosynthesis. Catalyzes the last two sequential reactions in the de novo biosynthetic pathway for UDP-N-acetylglucosamine (UDP-GlcNAc). The C-terminal domain catalyzes the transfer of acetyl group from acetyl coenzyme A to glucosamine-1-phosphate (GlcN-1-P) to produce N-acetylglucosamine-1-phosphate (GlcNAc-1-P), which is converted into UDP-GlcNAc by the transfer of uridine 5-monophosphate (from uridine 5-triphosphate), a reaction catalyzed by the N-terminal domain. The polypeptide is Bifunctional protein GlmU (Bacillus velezensis (strain DSM 23117 / BGSC 10A6 / LMG 26770 / FZB42) (Bacillus amyloliquefaciens subsp. plantarum)).